The following is a 230-amino-acid chain: Ribonuclease 3 (230 aa).

The RNase III domain occupies 5-125 (YSRFYNILGY…VIGAIYLDSD (121 aa)). Glu40 contributes to the Mg(2+) binding site. Asp44 is an active-site residue. Mg(2+) is bound by residues Asp111 and Glu114. Glu114 is an active-site residue. Positions 153–223 (DSKSKLQEIL…AEKMIEMLSQ (71 aa)) constitute a DRBM domain.

It belongs to the ribonuclease III family. In terms of assembly, homodimer. Requires Mg(2+) as cofactor.

Its subcellular location is the cytoplasm. The catalysed reaction is Endonucleolytic cleavage to 5'-phosphomonoester.. Digests double-stranded RNA. Involved in the processing of primary rRNA transcript to yield the immediate precursors to the large and small rRNAs (23S and 16S). Processes some mRNAs, and tRNAs when they are encoded in the rRNA operon. Processes pre-crRNA and tracrRNA of type II CRISPR loci if present in the organism. In Francisella tularensis subsp. holarctica (strain OSU18), this protein is Ribonuclease 3.